The sequence spans 156 residues: FAD synthase (156 aa).

Residues 16–17 (TF), 21–24 (HPGH), Asp101, and Tyr129 contribute to the ATP site.

The protein belongs to the archaeal FAD synthase family. As to quaternary structure, homodimer. The cofactor is a divalent metal cation.

It carries out the reaction FMN + ATP + H(+) = FAD + diphosphate. It functions in the pathway cofactor biosynthesis; FAD biosynthesis; FAD from FMN: step 1/1. In terms of biological role, catalyzes the transfer of the AMP portion of ATP to flavin mononucleotide (FMN) to produce flavin adenine dinucleotide (FAD) coenzyme. The chain is FAD synthase from Methanococcus aeolicus (strain ATCC BAA-1280 / DSM 17508 / OCM 812 / Nankai-3).